Here is a 67-residue protein sequence, read N- to C-terminus: Sporulation protein 24 (67 aa).

Residues serine 24 and serine 32 each carry the phosphoserine modification.

Post-translationally, phosphorylated during meiosis. During meiosis, exists in both unphosphorylated and phosphorylated forms with the highest degree of phosphorylation occurring in mid-meiosis.

It is found in the prospore membrane. Required for efficient sporulation. The sequence is that of Sporulation protein 24 from Saccharomyces cerevisiae (strain ATCC 204508 / S288c) (Baker's yeast).